Reading from the N-terminus, the 152-residue chain is Large ribosomal subunit protein bL9 (152 aa).

The protein belongs to the bacterial ribosomal protein bL9 family.

In terms of biological role, binds to the 23S rRNA. The polypeptide is Large ribosomal subunit protein bL9 (Nostoc sp. (strain PCC 7120 / SAG 25.82 / UTEX 2576)).